A 532-amino-acid polypeptide reads, in one-letter code: Protoporphyrinogen oxidase (532 aa).

FAD contacts are provided by residues 9 to 14 (GSGISG), Ile-289, and 511 to 513 (VGI).

Belongs to the protoporphyrinogen/coproporphyrinogen oxidase family. Protoporphyrinogen oxidase subfamily. The cofactor is FAD.

The protein localises to the mitochondrion. It catalyses the reaction protoporphyrinogen IX + 3 O2 = protoporphyrin IX + 3 H2O2. The protein operates within porphyrin-containing compound metabolism; protoporphyrin-IX biosynthesis; protoporphyrin-IX from protoporphyrinogen-IX: step 1/1. In terms of biological role, catalyzes the 6-electron oxidation of protoporphyrinogen-IX to form protoporphyrin-IX. The protein is Protoporphyrinogen oxidase (ppox) of Dictyostelium discoideum (Social amoeba).